Consider the following 120-residue polypeptide: Large ribosomal subunit protein bL17 (120 aa).

This sequence belongs to the bacterial ribosomal protein bL17 family. Part of the 50S ribosomal subunit. Contacts protein L32.

This is Large ribosomal subunit protein bL17 from Desulforapulum autotrophicum (strain ATCC 43914 / DSM 3382 / VKM B-1955 / HRM2) (Desulfobacterium autotrophicum).